Reading from the N-terminus, the 533-residue chain is SH3 and F-BAR domain-containing protein DDB_G0271676 (533 aa).

The F-BAR domain occupies 5-258 (RQFSEDLWDK…GIESIDRERD (254 aa)). Residues 76–186 (REQLELIGAL…ADKGDNEYRE (111 aa)) adopt a coiled-coil conformation. 2 stretches are compositionally biased toward basic and acidic residues: residues 126–155 (LKTAESNESKAKQNYEKLKRKQEEANEDLS) and 162–184 (KEQKARKTLESATKAADKGDNEY). Disordered stretches follow at residues 126-184 (LKTA…DNEY) and 301-405 (SRKS…INSN). Low complexity-rich tracts occupy residues 318–327 (SIISSPQQPQ), 340–360 (NIIIQQHQQSNNNNNTNNNSN), 372–385 (PQQQQLPQPTQLNN), and 392–405 (SLSKNDSSNSINSN). 2 consecutive SH3 domains span residues 406 to 468 (SNGE…DSSD) and 476 to 533 (VAGR…VQVI).

The polypeptide is SH3 and F-BAR domain-containing protein DDB_G0271676 (Dictyostelium discoideum (Social amoeba)).